The primary structure comprises 275 residues: Peptidoglycan-N-acetylglucosamine deacetylase BC_1960 (275 aa).

Positions 81–262 constitute a NodB homology domain; that stretch reads AEVALTFDDG…QLKTKGARFV (182 aa). Asp-88 acts as the Proton acceptor in catalysis. Zn(2+) is bound by residues Asp-89, His-139, and His-143. Pro-179 carries the 2-hydroxyproline; partial modification. The active-site Proton donor is the His-233.

The protein belongs to the polysaccharide deacetylase family. It depends on Zn(2+) as a cofactor. In terms of processing, hydroxylated on Pro-179. Hydroxylation alters the active site and enhances significantly deacetylase activity, probably by creating a more favorable environment for transition-state stabilization. It might be autocatalytic.

The enzyme catalyses peptidoglycan-N-acetyl-D-glucosamine + H2O = peptidoglycan-D-glucosamine + acetate.. Deacetylase activity is stimulated by hydroxylation on Pro-179. Inhibited by CuCl(2) and ZnCl(2). Inhibited by the hydroxamate N-hydroxy-4-(naphthalene-1-yl)benzamide (NHNB). Catalyzes the deacetylation of N-acetylglucosamine (GlcNAc) residues in peptidoglycan. Also acts on soluble chitin substrates and N-acetylchitooligomers. Acts on cell wall peptidoglycan from the Gram-positive bacteria B.cereus and B.subtilis and the Gram-negative bacterium H.pylori. Not active on acetylated xylan. In Bacillus cereus (strain ATCC 14579 / DSM 31 / CCUG 7414 / JCM 2152 / NBRC 15305 / NCIMB 9373 / NCTC 2599 / NRRL B-3711), this protein is Peptidoglycan-N-acetylglucosamine deacetylase BC_1960.